The primary structure comprises 432 residues: Zinc finger protein 829 (432 aa).

The KRAB domain occupies 35–106 (VMFRDVSIDF…DRELTRGLCS (72 aa)). A C2H2-type 1 zinc finger spans residues 156 to 178 (WECKICGKTFNQNSQFIQHQRIH). A C2H2-type 2; degenerate zinc finger spans residues 184-206 (YESKEYGKSFSRGSLVTRHQRIH). 8 C2H2-type zinc fingers span residues 212 to 234 (YECKECGKAFSCSSYFSQHQRIH), 240 to 262 (YECKECGKAFKYCSNLNDHQRIH), 268 to 290 (YECKVCGKAFTKSSQLFLHLRIH), 296 to 318 (YECKECGKAFTQHSRLIQHQRMH), 324 to 346 (YECKQCGKAFNSASTLTNHHRIH), 352 to 374 (YECEECRKAFIQSSELIQHQRIH), 380 to 402 (YECNECGKAFNKGSNLTRHQRIH), and 408 to 430 (YDCKECGKAFGSRSDLIRHEGIH).

This sequence belongs to the krueppel C2H2-type zinc-finger protein family.

The protein localises to the nucleus. Its function is as follows. May be involved in transcriptional regulation. This Homo sapiens (Human) protein is Zinc finger protein 829 (ZNF829).